A 216-amino-acid polypeptide reads, in one-letter code: Fibroblast growth factor 17 (216 aa).

The signal sequence occupies residues 1–22 (MGAARLLPNLTLCLQLLILCCQ). N-linked (GlcNAc...) asparagine glycosylation is present at N137. The tract at residues 190–216 (EKQKQFEFVGSAPTRRTKRTRRPQPLT) is disordered. A compositionally biased stretch (basic residues) spans 204–216 (RRTKRTRRPQPLT).

Belongs to the heparin-binding growth factors family. In terms of assembly, interacts with FGFR3 and FGFR4. In terms of tissue distribution, preferentially expressed in the embryonic brain.

The protein localises to the secreted. Functionally, plays an important role in the regulation of embryonic development and as signaling molecule in the induction and patterning of the embryonic brain. Required for normal brain development. The sequence is that of Fibroblast growth factor 17 (FGF17) from Homo sapiens (Human).